Here is a 309-residue protein sequence, read N- to C-terminus: Protein FdhE homolog (309 aa).

It belongs to the FdhE family.

The protein resides in the cytoplasm. Functionally, necessary for formate dehydrogenase activity. The polypeptide is Protein FdhE homolog (Enterobacter sp. (strain 638)).